The following is a 953-amino-acid chain: Lysosomal alpha-glucosidase (953 aa).

A signal peptide spans 1-27; the sequence is MNIRKPLCSNSVVGACTLISLTTAVIL. A propeptide spanning residues 28–69 is cleaved from the precursor; sequence GHLMLRELMLLPQDLHESSSGLWKTYRPHHQEGYKPGPLHIQ. One can recognise a P-type domain in the interval 80–131; it reads TQCDVPPSSRFDCAPDKGISQEQCEARGCCYVPAGQVLKEPQIGQPWCFFPP. 3 cysteine pairs are disulfide-bonded: Cys-82–Cys-109, Cys-92–Cys-108, and Cys-103–Cys-127. N-linked (GlcNAc...) asparagine glycosylation is found at Asn-140, Asn-233, and Asn-390. Asp-404 serves as a coordination point for substrate. Asn-470 carries N-linked (GlcNAc...) asparagine glycosylation. The active-site Nucleophile is the Asp-518. Glu-521 is a catalytic residue. A disulfide bridge connects residues Cys-533 and Cys-558. Substrate is bound by residues Arg-600 and Asp-616. A disulfide bridge links Cys-647 with Cys-658. A substrate-binding site is contributed by His-674. 3 N-linked (GlcNAc...) asparagine glycosylation sites follow: Asn-883, Asn-926, and Asn-933.

It belongs to the glycosyl hydrolase 31 family.

The protein resides in the lysosome. It localises to the lysosome membrane. It carries out the reaction Hydrolysis of terminal, non-reducing (1-&gt;4)-linked alpha-D-glucose residues with release of alpha-D-glucose.. Essential for the degradation of glycogen in lysosomes. Has highest activity on alpha-1,4-linked glycosidic linkages, but can also hydrolyze alpha-1,6-linked glucans. In Mus musculus (Mouse), this protein is Lysosomal alpha-glucosidase (Gaa).